The following is a 364-amino-acid chain: Anhydro-N-acetylmuramic acid kinase (364 aa).

Gly11 to Asp18 lines the ATP pocket.

The protein belongs to the anhydro-N-acetylmuramic acid kinase family.

It carries out the reaction 1,6-anhydro-N-acetyl-beta-muramate + ATP + H2O = N-acetyl-D-muramate 6-phosphate + ADP + H(+). The protein operates within amino-sugar metabolism; 1,6-anhydro-N-acetylmuramate degradation. It participates in cell wall biogenesis; peptidoglycan recycling. In terms of biological role, catalyzes the specific phosphorylation of 1,6-anhydro-N-acetylmuramic acid (anhMurNAc) with the simultaneous cleavage of the 1,6-anhydro ring, generating MurNAc-6-P. Is required for the utilization of anhMurNAc either imported from the medium or derived from its own cell wall murein, and thus plays a role in cell wall recycling. The polypeptide is Anhydro-N-acetylmuramic acid kinase (Pseudomonas savastanoi pv. phaseolicola (strain 1448A / Race 6) (Pseudomonas syringae pv. phaseolicola (strain 1448A / Race 6))).